The following is a 276-amino-acid chain: NAD-capped RNA hydrolase NudC (276 aa).

A substrate-binding site is contributed by Arg82. Residues Cys112 and Cys115 each contribute to the Zn(2+) site. Residue Glu125 coordinates substrate. Zn(2+) contacts are provided by Cys130 and Cys133. Tyr138 is a substrate binding site. Residues Pro139–Tyr262 form the Nudix hydrolase domain. The a divalent metal cation site is built by Ala172, Glu188, and Glu192. The short motif at Gly173–Ala194 is the Nudix box element. Gln206–Ser213 lines the substrate pocket. Position 233 (Glu233) interacts with a divalent metal cation. Ala255 provides a ligand contact to substrate.

Belongs to the Nudix hydrolase family. NudC subfamily. In terms of assembly, homodimer. It depends on Mg(2+) as a cofactor. Mn(2+) serves as cofactor. Requires Zn(2+) as cofactor.

It catalyses the reaction a 5'-end NAD(+)-phospho-ribonucleoside in mRNA + H2O = a 5'-end phospho-adenosine-phospho-ribonucleoside in mRNA + beta-nicotinamide D-ribonucleotide + 2 H(+). The catalysed reaction is NAD(+) + H2O = beta-nicotinamide D-ribonucleotide + AMP + 2 H(+). It carries out the reaction NADH + H2O = reduced beta-nicotinamide D-ribonucleotide + AMP + 2 H(+). MRNA decapping enzyme that specifically removes the nicotinamide adenine dinucleotide (NAD) cap from a subset of mRNAs by hydrolyzing the diphosphate linkage to produce nicotinamide mononucleotide (NMN) and 5' monophosphate mRNA. The NAD-cap is present at the 5'-end of some mRNAs and stabilizes RNA against 5'-processing. Has preference for mRNAs with a 5'-end purine. Catalyzes the hydrolysis of a broad range of dinucleotide pyrophosphates. This chain is NAD-capped RNA hydrolase NudC, found in Pseudomonas putida (strain ATCC 47054 / DSM 6125 / CFBP 8728 / NCIMB 11950 / KT2440).